The sequence spans 935 residues: C-1-tetrahydrofolate synthase, cytoplasmic (935 aa).

The residue at position 1 (Met-1) is an N-acetylmethionine. A methylenetetrahydrofolate dehydrogenase and methenyltetrahydrofolate cyclohydrolase (D/C) domain region spans residues 2 to 291 (APAGILNGKV…MLMQSTVESA (290 aa)). Substrate is bound by residues 52-56 (YINVK) and 99-101 (VQL). The active site involves Lys-56. NADP(+) contacts are provided by residues 172 to 174 (GRS) and Ser-197. Substrate is bound at residue 272–276 (PGGVG). Residues 310 to 935 (LNLKTPVPSD…PETEQVNGLF (626 aa)) are formyltetrahydrofolate synthetase domain. The residue at position 318 (Ser-318) is a Phosphoserine. 380-387 (TPLGEGKS) contributes to the ATP binding site. 2 positions are modified to phosphoserine: Ser-413 and Ser-490.

The protein in the N-terminal section; belongs to the tetrahydrofolate dehydrogenase/cyclohydrolase family. In the C-terminal section; belongs to the formate--tetrahydrofolate ligase family. As to quaternary structure, homodimer.

The protein localises to the cytoplasm. The catalysed reaction is (6R)-5,10-methylene-5,6,7,8-tetrahydrofolate + NADP(+) = (6R)-5,10-methenyltetrahydrofolate + NADPH. The enzyme catalyses (6R)-5,10-methenyltetrahydrofolate + H2O = (6R)-10-formyltetrahydrofolate + H(+). It carries out the reaction (6S)-5,6,7,8-tetrahydrofolate + formate + ATP = (6R)-10-formyltetrahydrofolate + ADP + phosphate. It functions in the pathway one-carbon metabolism; tetrahydrofolate interconversion. Functionally, trifunctional enzyme that catalyzes the interconversion of three forms of one-carbon-substituted tetrahydrofolate: (6R)-5,10-methylene-5,6,7,8-tetrahydrofolate, 5,10-methenyltetrahydrofolate and (6S)-10-formyltetrahydrofolate. These derivatives of tetrahydrofolate are differentially required in nucleotide and amino acid biosynthesis, (6S)-10-formyltetrahydrofolate being required for purine biosynthesis while (6R)-5,10-methylene-5,6,7,8-tetrahydrofolate is used for serine and methionine biosynthesis for instance. The protein is C-1-tetrahydrofolate synthase, cytoplasmic (Mthfd1) of Rattus norvegicus (Rat).